We begin with the raw amino-acid sequence, 289 residues long: Diaminopimelate epimerase (289 aa).

The substrate site is built by asparagine 17, glutamine 47, and asparagine 67. Catalysis depends on cysteine 76, which acts as the Proton donor. Residues 77 to 78 (GN), asparagine 164, asparagine 198, and 216 to 217 (ER) contribute to the substrate site. Catalysis depends on cysteine 225, which acts as the Proton acceptor. 226-227 (GS) contacts substrate.

It belongs to the diaminopimelate epimerase family. Homodimer.

It is found in the cytoplasm. The enzyme catalyses (2S,6S)-2,6-diaminopimelate = meso-2,6-diaminopimelate. It participates in amino-acid biosynthesis; L-lysine biosynthesis via DAP pathway; DL-2,6-diaminopimelate from LL-2,6-diaminopimelate: step 1/1. In terms of biological role, catalyzes the stereoinversion of LL-2,6-diaminopimelate (L,L-DAP) to meso-diaminopimelate (meso-DAP), a precursor of L-lysine and an essential component of the bacterial peptidoglycan. The polypeptide is Diaminopimelate epimerase (Bradyrhizobium sp. (strain BTAi1 / ATCC BAA-1182)).